The following is a 146-amino-acid chain: Hemoglobin subunit beta (146 aa).

An N-acetylvaline modification is found at V1. A Globin domain is found at 2–146 (HLTPEEKNAV…VANALAHKYH (145 aa)). Residue T12 is modified to Phosphothreonine. S44 is modified (phosphoserine). At K59 the chain carries N6-acetyllysine. H63 contacts heme b. K82 is subject to N6-acetyllysine. H92 contributes to the heme b binding site. C93 is subject to S-nitrosocysteine. K144 is subject to N6-acetyllysine.

This sequence belongs to the globin family. As to quaternary structure, heterotetramer of two alpha chains and two beta chains. In terms of tissue distribution, red blood cells.

Its function is as follows. Involved in oxygen transport from the lung to the various peripheral tissues. The chain is Hemoglobin subunit beta (HBB) from Papio cynocephalus (Yellow baboon).